The following is a 540-amino-acid chain: Chaperonin GroEL 1 (540 aa).

ATP contacts are provided by residues 30–33 (TLGP), K51, 87–91 (DGTTT), G415, 480–482 (NAA), and D496.

The protein belongs to the chaperonin (HSP60) family. Forms a cylinder of 14 subunits composed of two heptameric rings stacked back-to-back. Interacts with the co-chaperonin GroES.

It localises to the cytoplasm. The enzyme catalyses ATP + H2O + a folded polypeptide = ADP + phosphate + an unfolded polypeptide.. Together with its co-chaperonin GroES, plays an essential role in assisting protein folding. The GroEL-GroES system forms a nano-cage that allows encapsulation of the non-native substrate proteins and provides a physical environment optimized to promote and accelerate protein folding. In Bradyrhizobium diazoefficiens (strain JCM 10833 / BCRC 13528 / IAM 13628 / NBRC 14792 / USDA 110), this protein is Chaperonin GroEL 1.